Here is a 188-residue protein sequence, read N- to C-terminus: Elongation factor P-like protein (188 aa).

This sequence belongs to the elongation factor P family.

This Vibrio vulnificus (strain CMCP6) protein is Elongation factor P-like protein.